The primary structure comprises 363 residues: DNA polymerase IV (363 aa).

One can recognise a UmuC domain in the interval 14–197 (IIHIDMDAFF…LPVEKFHGVG (184 aa)). Residues D18 and D115 each contribute to the Mg(2+) site. The active site involves E116.

Belongs to the DNA polymerase type-Y family. Monomer. The cofactor is Mg(2+).

The protein resides in the cytoplasm. The catalysed reaction is DNA(n) + a 2'-deoxyribonucleoside 5'-triphosphate = DNA(n+1) + diphosphate. Functionally, poorly processive, error-prone DNA polymerase involved in untargeted mutagenesis. Copies undamaged DNA at stalled replication forks, which arise in vivo from mismatched or misaligned primer ends. These misaligned primers can be extended by PolIV. Exhibits no 3'-5' exonuclease (proofreading) activity. May be involved in translesional synthesis, in conjunction with the beta clamp from PolIII. The sequence is that of DNA polymerase IV from Lactococcus lactis subsp. lactis (strain IL1403) (Streptococcus lactis).